A 255-amino-acid chain; its full sequence is 5-oxoprolinase subunit A (255 aa).

Belongs to the LamB/PxpA family. As to quaternary structure, forms a complex composed of PxpA, PxpB and PxpC.

It catalyses the reaction 5-oxo-L-proline + ATP + 2 H2O = L-glutamate + ADP + phosphate + H(+). Catalyzes the cleavage of 5-oxoproline to form L-glutamate coupled to the hydrolysis of ATP to ADP and inorganic phosphate. The protein is 5-oxoprolinase subunit A of Campylobacter jejuni subsp. jejuni serotype O:6 (strain 81116 / NCTC 11828).